Here is a 510-residue protein sequence, read N- to C-terminus: Transcriptional regulatory protein GAT1 (510 aa).

At Ser-167 the chain carries Phosphoserine. A compositionally biased stretch (low complexity) spans 220–256; that stretch reads NHSHNSSHNNNSPSIANNTNANTNTNTSASTNTNSPL. Disordered regions lie at residues 220-311 and 358-383; these read NHSH…IKCS and QRSS…AAGK. Residues Ser-262 and Ser-270 each carry the phosphoserine modification. A compositionally biased stretch (basic residues) spans 274–287; that stretch reads SSVRKKKPALKKIK. The segment covering 294–306 has biased composition (low complexity); that stretch reads SSATPPSNTSSNP. The segment at 310–334 adopts a GATA-type zinc-finger fold; that stretch reads CSNCTTSTTPLWRKDPKGLPLCNAC. Thr-369 bears the Phosphothreonine mark. 2 positions are modified to phosphoserine: Ser-399 and Ser-418.

It is found in the nucleus. In terms of biological role, positive regulator of multiple nitrogen catabolic genes. This is Transcriptional regulatory protein GAT1 (GAT1) from Saccharomyces cerevisiae (strain ATCC 204508 / S288c) (Baker's yeast).